A 207-amino-acid chain; its full sequence is Large ribosomal subunit protein uL4 (207 aa).

Positions 49–78 are disordered; it reads HAVKNRSAVSGGGRKPWRQKGTGRARQGSI.

The protein belongs to the universal ribosomal protein uL4 family. As to quaternary structure, part of the 50S ribosomal subunit.

One of the primary rRNA binding proteins, this protein initially binds near the 5'-end of the 23S rRNA. It is important during the early stages of 50S assembly. It makes multiple contacts with different domains of the 23S rRNA in the assembled 50S subunit and ribosome. Functionally, forms part of the polypeptide exit tunnel. The polypeptide is Large ribosomal subunit protein uL4 (Streptococcus agalactiae serotype Ia (strain ATCC 27591 / A909 / CDC SS700)).